The chain runs to 531 residues: Light-independent protochlorophyllide reductase subunit B (531 aa).

Residue aspartate 36 participates in [4Fe-4S] cluster binding. Aspartate 291 acts as the Proton donor in catalysis. 426–427 serves as a coordination point for substrate; that stretch reads GL.

It belongs to the ChlB/BchB/BchZ family. As to quaternary structure, protochlorophyllide reductase is composed of three subunits; ChlL, ChlN and ChlB. Forms a heterotetramer of two ChlB and two ChlN subunits. The cofactor is [4Fe-4S] cluster.

It carries out the reaction chlorophyllide a + oxidized 2[4Fe-4S]-[ferredoxin] + 2 ADP + 2 phosphate = protochlorophyllide a + reduced 2[4Fe-4S]-[ferredoxin] + 2 ATP + 2 H2O. The protein operates within porphyrin-containing compound metabolism; chlorophyll biosynthesis (light-independent). Its function is as follows. Component of the dark-operative protochlorophyllide reductase (DPOR) that uses Mg-ATP and reduced ferredoxin to reduce ring D of protochlorophyllide (Pchlide) to form chlorophyllide a (Chlide). This reaction is light-independent. The NB-protein (ChlN-ChlB) is the catalytic component of the complex. This Prochlorococcus marinus (strain MIT 9211) protein is Light-independent protochlorophyllide reductase subunit B.